A 348-amino-acid chain; its full sequence is Beta-hexosaminidase (348 aa).

Residues aspartate 64, arginine 72, arginine 138, and lysine 168–histidine 169 each bind substrate. The active-site Proton donor/acceptor is histidine 181. Aspartate 252 serves as the catalytic Nucleophile.

Belongs to the glycosyl hydrolase 3 family. NagZ subfamily.

It localises to the cytoplasm. The catalysed reaction is Hydrolysis of terminal non-reducing N-acetyl-D-hexosamine residues in N-acetyl-beta-D-hexosaminides.. It functions in the pathway cell wall biogenesis; peptidoglycan recycling. In terms of biological role, plays a role in peptidoglycan recycling by cleaving the terminal beta-1,4-linked N-acetylglucosamine (GlcNAc) from peptide-linked peptidoglycan fragments, giving rise to free GlcNAc, anhydro-N-acetylmuramic acid and anhydro-N-acetylmuramic acid-linked peptides. The polypeptide is Beta-hexosaminidase (Alkalilimnicola ehrlichii (strain ATCC BAA-1101 / DSM 17681 / MLHE-1)).